A 167-amino-acid polypeptide reads, in one-letter code: Endoribonuclease YbeY (167 aa).

3 residues coordinate Zn(2+): His-131, His-135, and His-141.

The protein belongs to the endoribonuclease YbeY family. Requires Zn(2+) as cofactor.

The protein resides in the cytoplasm. Its function is as follows. Single strand-specific metallo-endoribonuclease involved in late-stage 70S ribosome quality control and in maturation of the 3' terminus of the 16S rRNA. The chain is Endoribonuclease YbeY from Rickettsia rickettsii (strain Iowa).